The following is a 410-amino-acid chain: Dipeptidase 1 (410 aa).

The signal sequence occupies residues 1-16 (MWTGWWLWPLVAVCTA). Zn(2+) contacts are provided by His-36 and Asp-38. Residues Asn-57 and Asn-62 are each glycosylated (N-linked (GlcNAc...) asparagine). Cys-87 and Cys-170 are oxidised to a cystine. Residue Glu-141 coordinates Zn(2+). His-168 is a substrate binding site. Residues His-214 and His-235 each contribute to the Zn(2+) site. The cysteines at positions 242 and 274 are disulfide-linked. Arg-246 is a substrate binding site. Residue Asn-279 is glycosylated (N-linked (GlcNAc...) asparagine). Position 304 (Asp-304) interacts with substrate. A lipid anchor (GPI-anchor amidated serine) is attached at Ser-384. The propeptide at 385–410 (GAPSLHLQPGTLLASLVTLLLSLCLL) is removed in mature form.

Belongs to the metallo-dependent hydrolases superfamily. Peptidase M19 family. Homodimer; disulfide-linked. Zn(2+) serves as cofactor.

It localises to the apical cell membrane. It catalyses the reaction an L-aminoacyl-L-amino acid + H2O = 2 an L-alpha-amino acid. The enzyme catalyses leukotriene D4 + H2O = leukotriene E4 + glycine. The catalysed reaction is L-cystine-bis-glycine + 2 H2O = L-cystine + 2 glycine. It carries out the reaction a beta-lactam + H2O = a substituted beta-amino acid. It catalyses the reaction glycyldehydrophenylalanine + H2O = 2,3-didehydrophenylalanine + glycine. Inhibited by L-penicillamine. Inhibited by cilastatin. Its function is as follows. Hydrolyzes a wide range of dipeptides including the conversion of leukotriene D4 to leukotriene E4. Hydrolyzes cystinyl-bis-glycine (cys-bis-gly) formed during glutathione degradation. Also possesses beta lactamase activity and hydrolytically inactivates beta-lactam antibiotics. In terms of biological role, independently of its dipeptidase activity, acts as an adhesion receptor for neutrophil recruitment from bloodstream into inflamed lungs and liver. The sequence is that of Dipeptidase 1 (DPEP1) from Bos taurus (Bovine).